The primary structure comprises 274 residues: MAD2L1-binding protein (274 aa).

The interaction with MAD2L1 stretch occupies residues A45–K78. S102 is subject to Phosphoserine.

The protein belongs to the MAD2L1BP family. As to quaternary structure, interacts with MAD2L1.

It localises to the nucleus. The protein resides in the cytoplasm. It is found in the cytoskeleton. The protein localises to the spindle. In terms of biological role, may function to silence the spindle checkpoint and allow mitosis to proceed through anaphase by binding MAD2L1 after it has become dissociated from the MAD2L1-CDC20 complex. This is MAD2L1-binding protein (MAD2L1BP) from Homo sapiens (Human).